We begin with the raw amino-acid sequence, 362 residues long: Glutamate 5-kinase (362 aa).

Residue Lys-3 coordinates ATP. Residues Ser-43, Asp-128, and Asn-140 each coordinate substrate. ATP is bound by residues Thr-160–Asp-161 and Thr-202–Lys-208. The region spanning Ala-267–Ser-348 is the PUA domain.

The protein belongs to the glutamate 5-kinase family.

The protein localises to the cytoplasm. It catalyses the reaction L-glutamate + ATP = L-glutamyl 5-phosphate + ADP. It functions in the pathway amino-acid biosynthesis; L-proline biosynthesis; L-glutamate 5-semialdehyde from L-glutamate: step 1/2. In terms of biological role, catalyzes the transfer of a phosphate group to glutamate to form L-glutamate 5-phosphate. The chain is Glutamate 5-kinase from Xanthomonas oryzae pv. oryzae (strain MAFF 311018).